Here is a 360-residue protein sequence, read N- to C-terminus: MKKLLALAVIAPLLISCSSSTKKGETYNEAWVKDTNGFDILMGQFANNIENLWGYKEVLIAGPKDYVKYTDQFQTRSHINFDDGTITVETIAGTEPTAHLRRAIIKTLLMGDDPTSVDLYSDVDDIKISKEPFLYGQVVDNTGQPIRWEGRATTFADYLLKTRLKSRSNGLRIIYSVTINLVPNHLDKRAHKYIGMVRQASRKYGVDESLILAIMQTESSFNPYAVSHADALGLMQVVQHSAGKDVFRSQGKSGIPSRNFLFDPASNIDTGTAYLAMLNNVYLSGIENPTSRRYAVITAYNGGAGSVLRVFSNDKIQAANMINRMSPGDVYQILTTRHPSAESRRYLYKVNSAQRAYRRR.

The N-terminal stretch at 1–16 (MKKLLALAVIAPLLIS) is a signal peptide. C17 is lipidated: N-palmitoyl cysteine. Residue C17 is the site of S-diacylglycerol cysteine attachment.

This sequence belongs to the transglycosylase Slt family.

The protein localises to the cell outer membrane. It catalyses the reaction Exolytic cleavage of the (1-&gt;4)-beta-glycosidic linkage between N-acetylmuramic acid (MurNAc) and N-acetylglucosamine (GlcNAc) residues in peptidoglycan, from either the reducing or the non-reducing ends of the peptidoglycan chains, with concomitant formation of a 1,6-anhydrobond in the MurNAc residue.. Functionally, murein-degrading enzyme. May play a role in recycling of muropeptides during cell elongation and/or cell division. The polypeptide is Membrane-bound lytic murein transglycosylase C (Salmonella arizonae (strain ATCC BAA-731 / CDC346-86 / RSK2980)).